The sequence spans 193 residues: Cytidylate kinase (193 aa).

ATP is bound at residue glycine 12 to threonine 20.

This sequence belongs to the cytidylate kinase family. Type 2 subfamily.

It localises to the cytoplasm. The catalysed reaction is CMP + ATP = CDP + ADP. It catalyses the reaction dCMP + ATP = dCDP + ADP. The sequence is that of Cytidylate kinase from Methanopyrus kandleri (strain AV19 / DSM 6324 / JCM 9639 / NBRC 100938).